We begin with the raw amino-acid sequence, 468 residues long: Glutamate--tRNA ligase (468 aa).

A 'HIGH' region motif is present at residues 9–19; the sequence is PSPTGYLHVGG. Residues Cys-98, Cys-100, Cys-125, and Asp-127 each coordinate Zn(2+). The 'KMSKS' region signature appears at 235 to 239; sequence KLSKR. Residue Lys-238 participates in ATP binding.

The protein belongs to the class-I aminoacyl-tRNA synthetase family. Glutamate--tRNA ligase type 1 subfamily. As to quaternary structure, monomer. Zn(2+) serves as cofactor.

It is found in the cytoplasm. The enzyme catalyses tRNA(Glu) + L-glutamate + ATP = L-glutamyl-tRNA(Glu) + AMP + diphosphate. Catalyzes the attachment of glutamate to tRNA(Glu) in a two-step reaction: glutamate is first activated by ATP to form Glu-AMP and then transferred to the acceptor end of tRNA(Glu). This chain is Glutamate--tRNA ligase, found in Idiomarina loihiensis (strain ATCC BAA-735 / DSM 15497 / L2-TR).